Here is a 346-residue protein sequence, read N- to C-terminus: MVALIDQLYNVTALRECSSLNVAAWIVFGLGISKMVFLTLNFSKMVLDLFVLPGPDFKKYGKGKGAYAVVTGASDGIGKEYAKQLAKRGFNLILISRTESKLVELKKEIETECKIDVKILAIDVSSDSKENYTLIREVASGLPVTVLINNVGKSHSIPVPFDQTEESELRDIITINNTATLMITQTLLPQLKASVKTLKCRGLILTMGSFGGLLPTPFLATYSGSKAFLQSWSNALAGELSSDSIDVELVLSYLVTSAMSKIRRSSALIPSPKAFVRSTLNSIGKRCGAQERFATSTPYWSHALYHFIIENTVGVYSKIANSINYSFHLSIRKRALKKAERQAKKQ.

The chain crosses the membrane as a helical span at residues 23 to 43 (AAWIVFGLGISKMVFLTLNFS). Residues V69, D123, N150, Y222, K226, V255, and S257 each contribute to the NADP(+) site. The active-site Proton donor is the Y222. The active-site Lowers pKa of active site Tyr is K226.

The protein belongs to the short-chain dehydrogenases/reductases (SDR) family.

The protein localises to the endoplasmic reticulum membrane. It carries out the reaction a very-long-chain (3R)-3-hydroxyacyl-CoA + NADP(+) = a very-long-chain 3-oxoacyl-CoA + NADPH + H(+). The protein operates within lipid metabolism; fatty acid biosynthesis. Functionally, component of the microsomal membrane bound fatty acid elongation system, which produces the 26-carbon very long-chain fatty acids (VLCFA) from palmitate. Catalyzes the reduction of the 3-ketoacyl-CoA intermediate that is formed in each cycle of fatty acid elongation. VLCFAs serve as precursors for ceramide and sphingolipids. The sequence is that of Very-long-chain 3-oxoacyl-CoA reductase from Kluyveromyces lactis (strain ATCC 8585 / CBS 2359 / DSM 70799 / NBRC 1267 / NRRL Y-1140 / WM37) (Yeast).